The following is a 299-amino-acid chain: GTPase Era (299 aa).

The Era-type G domain occupies 5–175; it reads RSGFVCLVGR…IDVLAAALPP (171 aa). Residues 13 to 20 are G1; sequence GRPNTGKS. Position 13–20 (13–20) interacts with GTP; the sequence is GRPNTGKS. The G2 stretch occupies residues 39-43; it reads QTTRH. Residues 60–63 are G3; that stretch reads DTPG. Residues 60-64 and 124-127 contribute to the GTP site; these read DTPGL and TKID. The segment at 124–127 is G4; it reads TKID. The G5 stretch occupies residues 154–156; sequence VSA. Residues 206-285 enclose the KH type-2 domain; the sequence is VRDELPHSLA…YLDLRVKVAK (80 aa).

It belongs to the TRAFAC class TrmE-Era-EngA-EngB-Septin-like GTPase superfamily. Era GTPase family. As to quaternary structure, monomer.

The protein resides in the cell envelope. It is found in the secreted. Its subcellular location is the cell wall. Its function is as follows. Exhibits GTPase activity. Binds RNA but is probably not involved in ribosome assembly in mycobacteria. The polypeptide is GTPase Era (Mycobacterium avium (strain 104)).